Here is a 377-residue protein sequence, read N- to C-terminus: 8-amino-7-oxononanoate synthase (377 aa).

R13 is a substrate binding site. Residue G100–Y101 coordinates pyridoxal 5'-phosphate. H125 provides a ligand contact to substrate. 3 residues coordinate pyridoxal 5'-phosphate: S171, H199, and T228. K231 is subject to N6-(pyridoxal phosphate)lysine. T345 lines the substrate pocket.

The protein belongs to the class-II pyridoxal-phosphate-dependent aminotransferase family. BioF subfamily. Homodimer. Pyridoxal 5'-phosphate is required as a cofactor.

It carries out the reaction 6-carboxyhexanoyl-[ACP] + L-alanine + H(+) = (8S)-8-amino-7-oxononanoate + holo-[ACP] + CO2. The protein operates within cofactor biosynthesis; biotin biosynthesis. Its function is as follows. Catalyzes the decarboxylative condensation of pimeloyl-[acyl-carrier protein] and L-alanine to produce 8-amino-7-oxononanoate (AON), [acyl-carrier protein], and carbon dioxide. This chain is 8-amino-7-oxononanoate synthase, found in Nitrosococcus oceani (strain ATCC 19707 / BCRC 17464 / JCM 30415 / NCIMB 11848 / C-107).